A 258-amino-acid polypeptide reads, in one-letter code: Countin-1 (258 aa).

The signal sequence occupies residues 1 to 21 (MNKLFSLILALFLVNSAVVSS). The Saposin B-type domain maps to 22–106 (LDSCSICVDF…EKISVCKTND (85 aa)). 3 cysteine pairs are disulfide-bonded: cysteine 25–cysteine 102, cysteine 28–cysteine 96, and cysteine 56–cysteine 69. N-linked (GlcNAc...) asparagine glycosylation is found at asparagine 121 and asparagine 215. Over residues 233–248 (AGSFSGSSQSTQTGAA) the composition is skewed to low complexity. The interval 233–258 (AGSFSGSSQSTQTGAASGSGSGFALF) is disordered. Residues 249–258 (SGSGSGFALF) are compositionally biased toward gly residues.

It belongs to the countin family. Component of the counting factor (CF) complex, which includes cf60, cf50, cf45-1 and ctnA.

It is found in the secreted. In terms of biological role, cell-counting factor that limits the maximum size of the multicellular structure. May down-regulate the expression of gp24, which mediates cell adhesion. The sequence is that of Countin-1 (ctnA) from Dictyostelium discoideum (Social amoeba).